Reading from the N-terminus, the 276-residue chain is Undecaprenyl-diphosphatase 2 (276 aa).

8 helical membrane-spanning segments follow: residues 1–21, 44–64, 87–107, 114–134, 150–170, 190–210, 222–242, and 251–271; these read MSLW…LFPV, QLLP…LWYF, GHLM…GLLL, VFHD…LLWL, MTFK…IPGF, AAEF…VLEL, DALL…RFLM, and LASF…WFML.

It belongs to the UppP family.

The protein localises to the cell inner membrane. The enzyme catalyses di-trans,octa-cis-undecaprenyl diphosphate + H2O = di-trans,octa-cis-undecaprenyl phosphate + phosphate + H(+). In terms of biological role, catalyzes the dephosphorylation of undecaprenyl diphosphate (UPP). Confers resistance to bacitracin. This chain is Undecaprenyl-diphosphatase 2, found in Burkholderia lata (strain ATCC 17760 / DSM 23089 / LMG 22485 / NCIMB 9086 / R18194 / 383).